We begin with the raw amino-acid sequence, 193 residues long: Probable nicotinate-nucleotide adenylyltransferase (193 aa).

The protein belongs to the NadD family.

The enzyme catalyses nicotinate beta-D-ribonucleotide + ATP + H(+) = deamido-NAD(+) + diphosphate. Its pathway is cofactor biosynthesis; NAD(+) biosynthesis; deamido-NAD(+) from nicotinate D-ribonucleotide: step 1/1. Its function is as follows. Catalyzes the reversible adenylation of nicotinate mononucleotide (NaMN) to nicotinic acid adenine dinucleotide (NaAD). The sequence is that of Probable nicotinate-nucleotide adenylyltransferase from Flavobacterium psychrophilum (strain ATCC 49511 / DSM 21280 / CIP 103535 / JIP02/86).